Consider the following 254-residue polypeptide: Proteasome subunit alpha (254 aa).

Residues 234-254 are disordered; it reads EEMLPTPAATEDAPANGDAPS.

Belongs to the peptidase T1A family. As to quaternary structure, the 20S proteasome core is composed of 14 alpha and 14 beta subunits that assemble into four stacked heptameric rings, resulting in a barrel-shaped structure. The two inner rings, each composed of seven catalytic beta subunits, are sandwiched by two outer rings, each composed of seven alpha subunits. The catalytic chamber with the active sites is on the inside of the barrel. Has a gated structure, the ends of the cylinder being occluded by the N-termini of the alpha-subunits. Is capped by the proteasome-associated ATPase, ARC.

The protein localises to the cytoplasm. It functions in the pathway protein degradation; proteasomal Pup-dependent pathway. The formation of the proteasomal ATPase ARC-20S proteasome complex, likely via the docking of the C-termini of ARC into the intersubunit pockets in the alpha-rings, may trigger opening of the gate for substrate entry. Interconversion between the open-gate and close-gate conformations leads to a dynamic regulation of the 20S proteasome proteolysis activity. In terms of biological role, component of the proteasome core, a large protease complex with broad specificity involved in protein degradation. This chain is Proteasome subunit alpha, found in Rhodococcus erythropolis (strain PR4 / NBRC 100887).